A 295-amino-acid polypeptide reads, in one-letter code: UDP-N-acetylenolpyruvoylglucosamine reductase (295 aa).

The region spanning 24-188 is the FAD-binding PCMH-type domain; it reads KVGGNAEIFF…LKAVFKVNKG (165 aa). Arg-168 is a catalytic residue. The active-site Proton donor is the Ser-217. The active site involves Glu-287.

Belongs to the MurB family. FAD is required as a cofactor.

It is found in the cytoplasm. It carries out the reaction UDP-N-acetyl-alpha-D-muramate + NADP(+) = UDP-N-acetyl-3-O-(1-carboxyvinyl)-alpha-D-glucosamine + NADPH + H(+). It functions in the pathway cell wall biogenesis; peptidoglycan biosynthesis. Functionally, cell wall formation. In Rickettsia felis (strain ATCC VR-1525 / URRWXCal2) (Rickettsia azadi), this protein is UDP-N-acetylenolpyruvoylglucosamine reductase.